The primary structure comprises 287 residues: Phosphatidylinositol transfer protein 5 (287 aa).

The disordered stretch occupies residues 252–287 (FHNNNNNNSNNSNNNNNNNTQPQRSSFFSRSTDGNK). Low complexity predominate over residues 254-270 (NNNNNNSNNSNNNNNNN). Polar residues predominate over residues 271 to 287 (TQPQRSSFFSRSTDGNK).

Belongs to the PtdIns transfer protein family. PI transfer class IIA subfamily.

Phosphatidylinositol transfer proteins mediate the monomeric transport of lipids by shielding a lipid from the aqueous environment and binding the lipid in a hydrophobic cavity. The sequence is that of Phosphatidylinositol transfer protein 5 (pitE) from Dictyostelium discoideum (Social amoeba).